A 953-amino-acid polypeptide reads, in one-letter code: Coatomer subunit beta (953 aa).

Threonine 2 is subject to N-acetylthreonine. HEAT repeat units lie at residues 96 to 131, 132 to 168, 240 to 276, 277 to 314, 316 to 353, and 396 to 433; these read HEMI…KEAE, LLEP…NFEH, SERA…SAPT, AIKA…HPAH, RVLQ…SRNV, and DMAA…RFDN. At lysine 494 the chain carries N6-acetyllysine.

Oligomeric complex that consists of at least the alpha, beta, beta', gamma, delta, epsilon and zeta subunits. Interacts with CAPN8 and PRKCE. Interacts with SCYL1. Interacts with COPG1. Interacts with ARF1 (myristoylated); this interaction is required for binding of COPB1 to Golgi membranes. Interacts (via trunk domain) with ARF1 (via switch I region); the interaction is direct. Interacts with KCNK2 (via N-terminus); this interaction increases the channel-mediated whole cell currents and promotes plasma membrane expression of KCNK2. Interacts with STX17. Interacts with TMEM115. Interacts with TMEM41B. In terms of tissue distribution, high expression in the lung, kidney, skeletal muscle and small intestine, and lower level of expression in heart, liver, spleen, stomach and fat.

The protein resides in the cytoplasm. Its subcellular location is the golgi apparatus membrane. It is found in the cytoplasmic vesicle. The protein localises to the COPI-coated vesicle membrane. It localises to the cell membrane. The protein resides in the endoplasmic reticulum-Golgi intermediate compartment. In terms of biological role, the coatomer is a cytosolic protein complex that binds to dilysine motifs and reversibly associates with Golgi non-clathrin-coated vesicles, which further mediate biosynthetic protein transport from the ER, via the Golgi up to the trans Golgi network. Coatomer complex is required for budding from Golgi membranes, and is essential for the retrograde Golgi-to-ER transport of dilysine-tagged proteins. In mammals, the coatomer can only be recruited by membranes associated to ADP-ribosylation factors (ARFs), which are small GTP-binding proteins; the complex also influences the Golgi structural integrity, as well as the processing, activity, and endocytic recycling of LDL receptors. Plays a functional role in facilitating the transport of kappa-type opioid receptor mRNAs into axons and enhances translation of these proteins. Required for limiting lipid storage in lipid droplets. Involved in lipid homeostasis by regulating the presence of perilipin family members PLIN2 and PLIN3 at the lipid droplet surface and promoting the association of adipocyte surface triglyceride lipase (PNPLA2) with the lipid droplet to mediate lipolysis. Involved in the Golgi disassembly and reassembly processes during cell cycle. Involved in autophagy by playing a role in early endosome function. Plays a role in organellar compartmentalization of secretory compartments including endoplasmic reticulum (ER)-Golgi intermediate compartment (ERGIC), Golgi, trans-Golgi network (TGN) and recycling endosomes, and in biosynthetic transport of CAV1. The protein is Coatomer subunit beta of Sus scrofa (Pig).